The following is a 614-amino-acid chain: DBH-like monooxygenase protein 1 (614 aa).

Positions 1–22 (MRPLRPWALLLGALLGAAAAAA) are cleaved as a signal peptide. At 23–592 (RRYPHVAVLD…SSSCLPCSLS (570 aa)) the chain is on the lumenal side. One can recognise a DOMON domain in the interval 35–148 (AAYRLLWGRR…STVRVIWAYH (114 aa)). Asn114 carries an N-linked (GlcNAc...) asparagine glycan. Residue Tyr203 is part of the active site. 2 cysteine pairs are disulfide-bonded: Cys205/Cys257 and Cys242/Cys269. His235 and His236 together coordinate Cu cation. Asn247 is a glycosylation site (N-linked (GlcNAc...) asparagine). His307, His389, His391, and Met464 together coordinate Cu cation. Cystine bridges form between Cys364-Cys480, Cys368-Cys550, and Cys443-Cys465. The active site involves His389. N-linked (GlcNAc...) asparagine glycans are attached at residues Asn476 and Asn517. A helical transmembrane segment spans residues 593-613 (LTLLFVVYVASSTIGNFGPVV).

The protein belongs to the copper type II ascorbate-dependent monooxygenase family. Cu(2+) serves as cofactor.

The protein resides in the endoplasmic reticulum membrane. This Gallus gallus (Chicken) protein is DBH-like monooxygenase protein 1 (MOXD1).